The primary structure comprises 327 residues: GMP reductase (327 aa).

C176 acts as the Thioimidate intermediate in catalysis. Position 205 to 228 (205 to 228 (IIADGGIRTHGDIAKSIRFGASMV)) interacts with NADP(+).

This sequence belongs to the IMPDH/GMPR family. GuaC type 2 subfamily.

It carries out the reaction IMP + NH4(+) + NADP(+) = GMP + NADPH + 2 H(+). Functionally, catalyzes the irreversible NADPH-dependent deamination of GMP to IMP. It functions in the conversion of nucleobase, nucleoside and nucleotide derivatives of G to A nucleotides, and in maintaining the intracellular balance of A and G nucleotides. The protein is GMP reductase of Streptococcus pyogenes serotype M5 (strain Manfredo).